Consider the following 124-residue polypeptide: Large ribosomal subunit protein bL12 (124 aa).

Belongs to the bacterial ribosomal protein bL12 family. As to quaternary structure, homodimer. Part of the ribosomal stalk of the 50S ribosomal subunit. Forms a multimeric L10(L12)X complex, where L10 forms an elongated spine to which 2 to 4 L12 dimers bind in a sequential fashion. Binds GTP-bound translation factors.

In terms of biological role, forms part of the ribosomal stalk which helps the ribosome interact with GTP-bound translation factors. Is thus essential for accurate translation. In Wolinella succinogenes (strain ATCC 29543 / DSM 1740 / CCUG 13145 / JCM 31913 / LMG 7466 / NCTC 11488 / FDC 602W) (Vibrio succinogenes), this protein is Large ribosomal subunit protein bL12.